The following is a 328-amino-acid chain: Ribosomal RNA small subunit methyltransferase H (328 aa).

Residues 64 to 66, aspartate 83, phenylalanine 112, aspartate 129, and glutamine 136 contribute to the S-adenosyl-L-methionine site; that span reads GGH.

This sequence belongs to the methyltransferase superfamily. RsmH family.

Its subcellular location is the cytoplasm. The enzyme catalyses cytidine(1402) in 16S rRNA + S-adenosyl-L-methionine = N(4)-methylcytidine(1402) in 16S rRNA + S-adenosyl-L-homocysteine + H(+). In terms of biological role, specifically methylates the N4 position of cytidine in position 1402 (C1402) of 16S rRNA. The sequence is that of Ribosomal RNA small subunit methyltransferase H from Bdellovibrio bacteriovorus (strain ATCC 15356 / DSM 50701 / NCIMB 9529 / HD100).